A 315-amino-acid chain; its full sequence is tRNA wybutosine-synthesizing protein 5 (315 aa).

Residues 102–267 (DEKYYLRSLG…YDTTDTYGNK (166 aa)) enclose the JmjC domain. Tyrosine 106 is a 2-oxoglutarate binding site. Histidine 160 and aspartate 162 together coordinate Fe cation. Asparagine 166 and lysine 175 together coordinate 2-oxoglutarate. Residue histidine 235 participates in Fe cation binding.

Belongs to the TYW5 family. In terms of assembly, homodimer. Fe(2+) is required as a cofactor.

It catalyses the reaction 7-[(3S)-3-amino-3-carboxypropyl]wyosine(37) in tRNA(Phe) + 2-oxoglutarate + O2 = 7-(2-hydroxy-3-amino-3-carboxypropyl)wyosine(37) in tRNA(Phe) + succinate + CO2. It functions in the pathway tRNA modification; wybutosine-tRNA(Phe) biosynthesis. Functionally, tRNA hydroxylase that acts as a component of the wybutosine biosynthesis pathway. Wybutosine is a hyper modified guanosine with a tricyclic base found at the 3'-position adjacent to the anticodon of eukaryotic phenylalanine tRNA. Catalyzes the hydroxylation of 7-(a-amino-a-carboxypropyl)wyosine (yW-72) into undermodified hydroxywybutosine (OHyW*). OHyW* being further transformed into hydroxywybutosine (OHyW) by LCMT2/TYW4. OHyW is a derivative of wybutosine found in higher eukaryotes. The chain is tRNA wybutosine-synthesizing protein 5 (Tyw5) from Mus musculus (Mouse).